The following is a 224-amino-acid chain: Flagellar L-ring protein (224 aa).

The N-terminal stretch at 1 to 15 (MRSLLFSLTALVLAG) is a signal peptide. C16 carries N-palmitoyl cysteine lipidation. Residue C16 is the site of S-diacylglycerol cysteine attachment.

This sequence belongs to the FlgH family. The basal body constitutes a major portion of the flagellar organelle and consists of four rings (L,P,S, and M) mounted on a central rod.

The protein resides in the cell outer membrane. The protein localises to the bacterial flagellum basal body. Assembles around the rod to form the L-ring and probably protects the motor/basal body from shearing forces during rotation. This Idiomarina loihiensis (strain ATCC BAA-735 / DSM 15497 / L2-TR) protein is Flagellar L-ring protein.